Reading from the N-terminus, the 212-residue chain is Penicillin-binding protein activator LpoB (212 aa).

Positions 1-19 (MTKMHRYAAIAALAIFLSG) are cleaved as a signal peptide. C20 carries the N-palmitoyl cysteine lipid modification. C20 is lipidated: S-diacylglycerol cysteine. The segment at 28-73 (PVEEVKPAPEQPAQPPQPPVVPSVPTIPQQPGPIEHEDQTGQPAPK) is disordered. Pro residues predominate over residues 36–49 (PEQPAQPPQPPVVP).

Belongs to the LpoB family. Interacts with PBP1b.

Its subcellular location is the cell outer membrane. In terms of biological role, regulator of peptidoglycan synthesis that is essential for the function of penicillin-binding protein 1B (PBP1b). The sequence is that of Penicillin-binding protein activator LpoB from Salmonella typhimurium (strain LT2 / SGSC1412 / ATCC 700720).